The chain runs to 478 residues: Adenosylhomocysteinase (478 aa).

The substrate site is built by threonine 67, aspartate 144, and glutamate 204. 205-207 (TTT) is a binding site for NAD(+). Substrate contacts are provided by lysine 234 and aspartate 238. NAD(+)-binding positions include asparagine 239, 268–273 (GYGDVG), glutamate 291, asparagine 326, 347–349 (IGH), and asparagine 392.

It belongs to the adenosylhomocysteinase family. The cofactor is NAD(+).

The protein resides in the cytoplasm. The catalysed reaction is S-adenosyl-L-homocysteine + H2O = L-homocysteine + adenosine. It functions in the pathway amino-acid biosynthesis; L-homocysteine biosynthesis; L-homocysteine from S-adenosyl-L-homocysteine: step 1/1. May play a key role in the regulation of the intracellular concentration of adenosylhomocysteine. This Nitrosomonas eutropha (strain DSM 101675 / C91 / Nm57) protein is Adenosylhomocysteinase.